The following is a 143-amino-acid chain: Small ribosomal subunit protein bS6 (143 aa).

A disordered region spans residues 98-143 (TEQSLIMKSKDEKGDKPERSERRRRDDEEGEAPAANDNDGDNAEAA). The segment covering 105–124 (KSKDEKGDKPERSERRRRDD) has biased composition (basic and acidic residues).

It belongs to the bacterial ribosomal protein bS6 family.

In terms of biological role, binds together with bS18 to 16S ribosomal RNA. This chain is Small ribosomal subunit protein bS6, found in Xanthomonas euvesicatoria pv. vesicatoria (strain 85-10) (Xanthomonas campestris pv. vesicatoria).